The sequence spans 232 residues: MKKTAVIVFSGGQDSTTCLIHALPLYDEVHCITFDYGQRHHAEIETAQRLSKQLGATVHKVLDASLLNELAISSLTRDNIPVPTVNSSGESLPSTFVPGRNILFLTLASIYAYQVKAETVITGVCETDFSGYPDCRDEFVKALNKALELGMEYKLRLETPLMWLNKAETWALADYHNQLELVREQTLTCYNGIMGSGCANCDACNLRAKGLNAYLENKTQVMDSLKSKMGLK.

9-19 contacts ATP; sequence FSGGQDSTTCL. Zn(2+) is bound by residues C189, C198, C201, and C204.

It belongs to the QueC family. It depends on Zn(2+) as a cofactor.

It carries out the reaction 7-carboxy-7-deazaguanine + NH4(+) + ATP = 7-cyano-7-deazaguanine + ADP + phosphate + H2O + H(+). It functions in the pathway purine metabolism; 7-cyano-7-deazaguanine biosynthesis. Functionally, catalyzes the ATP-dependent conversion of 7-carboxy-7-deazaguanine (CDG) to 7-cyano-7-deazaguanine (preQ(0)). The polypeptide is 7-cyano-7-deazaguanine synthase 2 (Pseudomonas fluorescens (strain ATCC BAA-477 / NRRL B-23932 / Pf-5)).